Reading from the N-terminus, the 449-residue chain is Tubulin beta-6 chain (449 aa).

The GTP site is built by Q11, E69, S138, G142, T143, G144, N204, and N226. E69 lines the Mg(2+) pocket. The tract at residues 425–449 is disordered; that stretch reads YQDATADDEGEYEEDEDEEEILDHE. The segment covering 429-449 has biased composition (acidic residues); that stretch reads TADDEGEYEEDEDEEEILDHE.

Belongs to the tubulin family. As to quaternary structure, dimer of alpha and beta chains. A typical microtubule is a hollow water-filled tube with an outer diameter of 25 nm and an inner diameter of 15 nM. Alpha-beta heterodimers associate head-to-tail to form protofilaments running lengthwise along the microtubule wall with the beta-tubulin subunit facing the microtubule plus end conferring a structural polarity. Microtubules usually have 13 protofilaments but different protofilament numbers can be found in some organisms and specialized cells. It depends on Mg(2+) as a cofactor.

Its subcellular location is the cytoplasm. It is found in the cytoskeleton. Tubulin is the major constituent of microtubules, a cylinder consisting of laterally associated linear protofilaments composed of alpha- and beta-tubulin heterodimers. Microtubules grow by the addition of GTP-tubulin dimers to the microtubule end, where a stabilizing cap forms. Below the cap, tubulin dimers are in GDP-bound state, owing to GTPase activity of alpha-tubulin. The protein is Tubulin beta-6 chain (TUBB6) of Arabidopsis thaliana (Mouse-ear cress).